The primary structure comprises 418 residues: Gamma-glutamyl phosphate reductase (418 aa).

This sequence belongs to the gamma-glutamyl phosphate reductase family.

It localises to the cytoplasm. It carries out the reaction L-glutamate 5-semialdehyde + phosphate + NADP(+) = L-glutamyl 5-phosphate + NADPH + H(+). The protein operates within amino-acid biosynthesis; L-proline biosynthesis; L-glutamate 5-semialdehyde from L-glutamate: step 2/2. Its function is as follows. Catalyzes the NADPH-dependent reduction of L-glutamate 5-phosphate into L-glutamate 5-semialdehyde and phosphate. The product spontaneously undergoes cyclization to form 1-pyrroline-5-carboxylate. The polypeptide is Gamma-glutamyl phosphate reductase (Pelobacter propionicus (strain DSM 2379 / NBRC 103807 / OttBd1)).